A 344-amino-acid polypeptide reads, in one-letter code: Pre-mRNA polyadenylation factor fip1 (344 aa).

Disordered stretches follow at residues M1 to A99 and N230 to Y344. The segment covering V28 to Q38 has biased composition (polar residues). The span at A39–F50 shows a compositional bias: acidic residues. The segment covering Q80 to E92 has biased composition (basic and acidic residues). The span at S243–S258 shows a compositional bias: low complexity. Residues N271 to A301 are compositionally biased toward polar residues. A compositionally biased stretch (low complexity) spans S302–S317.

The protein belongs to the FIP1 family.

It is found in the nucleus. Functionally, pre-mRNA polyadenylation factor that directly interacts with poly(A) polymerase. The protein is Pre-mRNA polyadenylation factor fip1 of Schizosaccharomyces pombe (strain 972 / ATCC 24843) (Fission yeast).